The following is a 311-amino-acid chain: Putative S-adenosyl-L-methionine-dependent methyltransferase MSMEG_0095/MSMEI_0092 (311 aa).

S-adenosyl-L-methionine-binding positions include D134 and 163-164 (DL).

This sequence belongs to the UPF0677 family.

Exhibits S-adenosyl-L-methionine-dependent methyltransferase activity. This chain is Putative S-adenosyl-L-methionine-dependent methyltransferase MSMEG_0095/MSMEI_0092, found in Mycolicibacterium smegmatis (strain ATCC 700084 / mc(2)155) (Mycobacterium smegmatis).